A 203-amino-acid chain; its full sequence is Ribonuclease HII (203 aa).

The RNase H type-2 domain occupies 15–201; sequence LLVAGLDEAG…VAQAPLRFPE (187 aa). Residues D21, E22, and D111 each contribute to the a divalent metal cation site.

It belongs to the RNase HII family. Requires Mn(2+) as cofactor. It depends on Mg(2+) as a cofactor.

Its subcellular location is the cytoplasm. It catalyses the reaction Endonucleolytic cleavage to 5'-phosphomonoester.. Its function is as follows. Endonuclease that specifically degrades the RNA of RNA-DNA hybrids. This chain is Ribonuclease HII, found in Thermus thermophilus (strain ATCC BAA-163 / DSM 7039 / HB27).